The primary structure comprises 203 residues: ATP-dependent Clp protease proteolytic subunit (203 aa).

Catalysis depends on Ser-107, which acts as the Nucleophile. Residue His-132 is part of the active site.

Belongs to the peptidase S14 family. As to quaternary structure, fourteen ClpP subunits assemble into 2 heptameric rings which stack back to back to give a disk-like structure with a central cavity, resembling the structure of eukaryotic proteasomes.

It is found in the cytoplasm. The catalysed reaction is Hydrolysis of proteins to small peptides in the presence of ATP and magnesium. alpha-casein is the usual test substrate. In the absence of ATP, only oligopeptides shorter than five residues are hydrolyzed (such as succinyl-Leu-Tyr-|-NHMec, and Leu-Tyr-Leu-|-Tyr-Trp, in which cleavage of the -Tyr-|-Leu- and -Tyr-|-Trp bonds also occurs).. Functionally, cleaves peptides in various proteins in a process that requires ATP hydrolysis. Has a chymotrypsin-like activity. Plays a major role in the degradation of misfolded proteins. The protein is ATP-dependent Clp protease proteolytic subunit of Shewanella frigidimarina (strain NCIMB 400).